Here is a 258-residue protein sequence, read N- to C-terminus: Pimeloyl-[acyl-carrier protein] methyl ester esterase (258 aa).

The AB hydrolase-1 domain occupies 16–242; sequence LVLLHGWGLN…AAHAPFISHP (227 aa). Residues W22, 82–83, and 143–147 contribute to the substrate site; these read SL and FLALQ. Residue S82 is the Nucleophile of the active site. Residues D207 and H235 contribute to the active site. H235 contacts substrate.

The protein belongs to the AB hydrolase superfamily. Carboxylesterase BioH family. As to quaternary structure, monomer.

The protein resides in the cytoplasm. It catalyses the reaction 6-carboxyhexanoyl-[ACP] methyl ester + H2O = 6-carboxyhexanoyl-[ACP] + methanol + H(+). It participates in cofactor biosynthesis; biotin biosynthesis. Its function is as follows. The physiological role of BioH is to remove the methyl group introduced by BioC when the pimeloyl moiety is complete. It allows to synthesize pimeloyl-ACP via the fatty acid synthetic pathway through the hydrolysis of the ester bonds of pimeloyl-ACP esters. This chain is Pimeloyl-[acyl-carrier protein] methyl ester esterase, found in Edwardsiella ictaluri (strain 93-146).